We begin with the raw amino-acid sequence, 391 residues long: Alkanesulfonate monooxygenase (391 aa).

The protein belongs to the SsuD family.

The enzyme catalyses an alkanesulfonate + FMNH2 + O2 = an aldehyde + FMN + sulfite + H2O + 2 H(+). Catalyzes the desulfonation of aliphatic sulfonates. This is Alkanesulfonate monooxygenase from Rhodopseudomonas palustris (strain TIE-1).